A 491-amino-acid chain; its full sequence is Glutamyl-tRNA(Gln) amidotransferase subunit A (491 aa).

Catalysis depends on charge relay system residues Lys78 and Ser158. Ser182 serves as the catalytic Acyl-ester intermediate.

The protein belongs to the amidase family. GatA subfamily. As to quaternary structure, heterotrimer of A, B and C subunits.

The enzyme catalyses L-glutamyl-tRNA(Gln) + L-glutamine + ATP + H2O = L-glutaminyl-tRNA(Gln) + L-glutamate + ADP + phosphate + H(+). Allows the formation of correctly charged Gln-tRNA(Gln) through the transamidation of misacylated Glu-tRNA(Gln) in organisms which lack glutaminyl-tRNA synthetase. The reaction takes place in the presence of glutamine and ATP through an activated gamma-phospho-Glu-tRNA(Gln). This chain is Glutamyl-tRNA(Gln) amidotransferase subunit A, found in Afipia carboxidovorans (strain ATCC 49405 / DSM 1227 / KCTC 32145 / OM5) (Oligotropha carboxidovorans).